Consider the following 389-residue polypeptide: uncharacterized protein (389 aa).

WD repeat units lie at residues 11–53 (SFGS…QKIK), 146–186 (SHHD…EEDA), and 289–330 (AHGD…LDIP). The residue at position 351 (Ser351) is a Phosphoserine. Residues 361–389 (QKESVSTRPRKEKHKKAKKHSMKSRFKPY) are disordered. The span at 368–389 (RPRKEKHKKAKKHSMKSRFKPY) shows a compositional bias: basic residues.

This is an uncharacterized protein from Saccharomyces cerevisiae (strain ATCC 204508 / S288c) (Baker's yeast).